The sequence spans 150 residues: uncharacterized protein (150 aa).

The region spanning 5 to 66 (LDKVDRRLLE…KPNYKKLNLG (62 aa)) is the HTH asnC-type domain. A DNA-binding region (H-T-H motif) is located at residues 24-43 (IATLSKKLGIPRTTVHYRIK).

This is an uncharacterized protein from Pyrococcus abyssi (strain GE5 / Orsay).